Consider the following 294-residue polypeptide: Acetyl-coenzyme A carboxylase carboxyl transferase subunit beta (294 aa).

Positions 25–294 (VWTKCTSCEQ…PLVVPVDGSH (270 aa)) constitute a CoA carboxyltransferase N-terminal domain. The Zn(2+) site is built by C29, C32, C48, and C51. Residues 29–51 (CTSCEQVLYSAELERNLEVCPKC) form a C4-type zinc finger.

Belongs to the AccD/PCCB family. In terms of assembly, acetyl-CoA carboxylase is a heterohexamer composed of biotin carboxyl carrier protein (AccB), biotin carboxylase (AccC) and two subunits each of ACCase subunit alpha (AccA) and ACCase subunit beta (AccD). Zn(2+) serves as cofactor.

Its subcellular location is the cytoplasm. It carries out the reaction N(6)-carboxybiotinyl-L-lysyl-[protein] + acetyl-CoA = N(6)-biotinyl-L-lysyl-[protein] + malonyl-CoA. It participates in lipid metabolism; malonyl-CoA biosynthesis; malonyl-CoA from acetyl-CoA: step 1/1. Component of the acetyl coenzyme A carboxylase (ACC) complex. Biotin carboxylase (BC) catalyzes the carboxylation of biotin on its carrier protein (BCCP) and then the CO(2) group is transferred by the transcarboxylase to acetyl-CoA to form malonyl-CoA. The sequence is that of Acetyl-coenzyme A carboxylase carboxyl transferase subunit beta from Aliivibrio fischeri (strain ATCC 700601 / ES114) (Vibrio fischeri).